The following is a 118-amino-acid chain: UPF0342 protein BCE_0953 (118 aa).

This sequence belongs to the UPF0342 family.

This chain is UPF0342 protein BCE_0953, found in Bacillus cereus (strain ATCC 10987 / NRS 248).